The primary structure comprises 264 residues: Thymidylate synthase (264 aa).

Arg21 is a dUMP binding site. His51 is a binding site for (6R)-5,10-methylene-5,6,7,8-tetrahydrofolate. 126 to 127 serves as a coordination point for dUMP; sequence RR. The active-site Nucleophile is Cys146. DUMP contacts are provided by residues 166-169, Asn177, and 207-209; these read RSCD and HLY. A (6R)-5,10-methylene-5,6,7,8-tetrahydrofolate-binding site is contributed by Asp169. A (6R)-5,10-methylene-5,6,7,8-tetrahydrofolate-binding site is contributed by Ala263.

This sequence belongs to the thymidylate synthase family. Bacterial-type ThyA subfamily. Homodimer.

The protein localises to the cytoplasm. The enzyme catalyses dUMP + (6R)-5,10-methylene-5,6,7,8-tetrahydrofolate = 7,8-dihydrofolate + dTMP. It participates in pyrimidine metabolism; dTTP biosynthesis. In terms of biological role, catalyzes the reductive methylation of 2'-deoxyuridine-5'-monophosphate (dUMP) to 2'-deoxythymidine-5'-monophosphate (dTMP) while utilizing 5,10-methylenetetrahydrofolate (mTHF) as the methyl donor and reductant in the reaction, yielding dihydrofolate (DHF) as a by-product. This enzymatic reaction provides an intracellular de novo source of dTMP, an essential precursor for DNA biosynthesis. The protein is Thymidylate synthase of Xenorhabdus nematophila (strain ATCC 19061 / DSM 3370 / CCUG 14189 / LMG 1036 / NCIMB 9965 / AN6).